The primary structure comprises 1345 residues: Mediator of RNA polymerase II transcription subunit 13 (1345 aa).

Disordered stretches follow at residues K363–P387 and F402–G537. A compositionally biased stretch (low complexity) spans S364 to S375. Over residues P406–L415 the composition is skewed to polar residues. A compositionally biased stretch (acidic residues) spans L469 to L482. Polar residues predominate over residues S486–G501.

This sequence belongs to the Mediator complex subunit 13 family. In terms of assembly, component of the SRB8-11 complex, which itself associates with the Mediator complex.

It localises to the nucleus. Its function is as follows. Component of the SRB8-11 complex. The SRB8-11 complex is a regulatory module of the Mediator complex which is itself involved in regulation of basal and activated RNA polymerase II-dependent transcription. The SRB8-11 complex may be involved in the transcriptional repression of a subset of genes regulated by Mediator. It may inhibit the association of the Mediator complex with RNA polymerase II to form the holoenzyme complex. The sequence is that of Mediator of RNA polymerase II transcription subunit 13 (SSN2) from Candida glabrata (strain ATCC 2001 / BCRC 20586 / JCM 3761 / NBRC 0622 / NRRL Y-65 / CBS 138) (Yeast).